The sequence spans 564 residues: Septation ring formation regulator EzrA (564 aa).

The Extracellular portion of the chain corresponds to 1 to 4 (MVLF). Residues 5 to 23 (IILAILVVILIAIGVLFYM) form a helical membrane-spanning segment. Topologically, residues 24-564 (RSNKRNLIEK…KHIEEQVIKE (541 aa)) are cytoplasmic. Coiled-coil stretches lie at residues 84-126 (VEEK…HQVT), 165-223 (EAAE…LIRE), 271-303 (MISR…YEVK), and 350-435 (VRQF…RRLL).

This sequence belongs to the EzrA family.

It localises to the cell membrane. Functionally, negative regulator of FtsZ ring formation; modulates the frequency and position of FtsZ ring formation. Inhibits FtsZ ring formation at polar sites. Interacts either with FtsZ or with one of its binding partners to promote depolymerization. The polypeptide is Septation ring formation regulator EzrA (Staphylococcus epidermidis (strain ATCC 35984 / DSM 28319 / BCRC 17069 / CCUG 31568 / BM 3577 / RP62A)).